A 298-amino-acid polypeptide reads, in one-letter code: Diphthine methyl ester synthase (298 aa).

S-adenosyl-L-methionine-binding positions include L9, D85, G88, 113–114, L164, L222, and H247; that span reads SV.

Belongs to the diphthine synthase family.

It is found in the cytoplasm. The catalysed reaction is 2-[(3S)-amino-3-carboxypropyl]-L-histidyl-[translation elongation factor 2] + 4 S-adenosyl-L-methionine = diphthine methyl ester-[translation elongation factor 2] + 4 S-adenosyl-L-homocysteine + 3 H(+). The protein operates within protein modification; peptidyl-diphthamide biosynthesis. S-adenosyl-L-methionine-dependent methyltransferase that catalyzes four methylations of the modified target histidine residue in translation elongation factor 2 (EF-2), to form an intermediate called diphthine methyl ester. The four successive methylation reactions represent the second step of diphthamide biosynthesis. This is Diphthine methyl ester synthase (DPH5) from Kluyveromyces lactis (strain ATCC 8585 / CBS 2359 / DSM 70799 / NBRC 1267 / NRRL Y-1140 / WM37) (Yeast).